Here is a 260-residue protein sequence, read N- to C-terminus: Thiazole synthase (260 aa).

K102 acts as the Schiff-base intermediate with DXP in catalysis. 1-deoxy-D-xylulose 5-phosphate is bound by residues G163, 189–190 (AG), and 211–212 (NT).

This sequence belongs to the ThiG family. In terms of assembly, homotetramer. Forms heterodimers with either ThiH or ThiS.

The protein resides in the cytoplasm. It carries out the reaction [ThiS sulfur-carrier protein]-C-terminal-Gly-aminoethanethioate + 2-iminoacetate + 1-deoxy-D-xylulose 5-phosphate = [ThiS sulfur-carrier protein]-C-terminal Gly-Gly + 2-[(2R,5Z)-2-carboxy-4-methylthiazol-5(2H)-ylidene]ethyl phosphate + 2 H2O + H(+). Its pathway is cofactor biosynthesis; thiamine diphosphate biosynthesis. Catalyzes the rearrangement of 1-deoxy-D-xylulose 5-phosphate (DXP) to produce the thiazole phosphate moiety of thiamine. Sulfur is provided by the thiocarboxylate moiety of the carrier protein ThiS. In vitro, sulfur can be provided by H(2)S. This chain is Thiazole synthase, found in Geobacter sp. (strain M21).